A 412-amino-acid chain; its full sequence is Poly-beta-1,6-N-acetyl-D-glucosamine synthase (412 aa).

4 helical membrane-spanning segments follow: residues 7–28 (LLFY…YFFI), 298–320 (IASI…TANI), 332–354 (IFFF…ALFI), and 364–386 (VGLI…VVIM).

The protein belongs to the glycosyltransferase 2 family.

The protein resides in the cell membrane. In terms of biological role, N-acetylglucosaminyltransferase that catalyzes the polymerization of single monomer units of UDP-N-acetylglucosamine to produce the linear homomer poly-beta-1,6-N-acetyl-D-glucosamine (PNAG, also referred to as PIA), a biofilm adhesin polysaccharide. Requires IcaD for full activity. The sequence is that of Poly-beta-1,6-N-acetyl-D-glucosamine synthase (icaA) from Staphylococcus epidermidis (strain ATCC 35984 / DSM 28319 / BCRC 17069 / CCUG 31568 / BM 3577 / RP62A).